The sequence spans 516 residues: Poly(U)-binding-splicing factor PUF60-B (516 aa).

RRM domains lie at 86-164 (CRVY…RPGS) and 183-261 (NRIY…KAVT). A disordered region spans residues 356–398 (TAPASMGTPTSAVQLHTEVKREEDSRRTAEDHSAPVGNGQDSE). The span at 372-388 (TEVKREEDSRRTAEDHS) shows a compositional bias: basic and acidic residues. The region spanning 419–506 (TVMVLRNMVG…RKVVAELYDQ (88 aa)) is the RRM 3; atypical domain.

The protein belongs to the RRM half pint family.

It localises to the nucleus. DNA- and RNA-binding protein, involved in transcription repression and pre-mRNA splicing. The protein is Poly(U)-binding-splicing factor PUF60-B (puf60b) of Danio rerio (Zebrafish).